The sequence spans 250 residues: DNA repair protein RecO (250 aa).

This sequence belongs to the RecO family.

Its function is as follows. Involved in DNA repair and RecF pathway recombination. The sequence is that of DNA repair protein RecO from Rhodospirillum centenum (strain ATCC 51521 / SW).